Here is a 98-residue protein sequence, read N- to C-terminus: Putative zinc finger protein ORF98b (98 aa).

Residues 54 to 77 (GFCPYCHNHYRTFGILANHIMRSH) form a C2H2-type zinc finger.

This Acidianus convivator (ATV) protein is Putative zinc finger protein ORF98b.